The chain runs to 376 residues: Deoxyguanosinetriphosphate triphosphohydrolase-like protein (376 aa).

The disordered stretch occupies residues 1–32 (MEPSFAPYAAHSSQTRGRVHREAPAAPRSEFQ). The region spanning 65-196 (RLTHSIEVAQ…ANLADEIAYN (132 aa)) is the HD domain.

It belongs to the dGTPase family. Type 2 subfamily.

The sequence is that of Deoxyguanosinetriphosphate triphosphohydrolase-like protein from Thiobacillus denitrificans (strain ATCC 25259 / T1).